The primary structure comprises 513 residues: Cyclin-dependent kinase C-2 (513 aa).

In terms of domain architecture, Protein kinase spans phenylalanine 26 to phenylalanine 325. ATP is bound by residues isoleucine 32–valine 40 and lysine 55. Tyrosine 37 carries the post-translational modification Phosphotyrosine. Aspartate 164 (proton acceptor) is an active-site residue. A Phosphothreonine modification is found at threonine 198. Positions leucine 337–proline 513 are disordered. Low complexity predominate over residues alanine 395 to asparagine 404. Residues serine 434 to glycine 448 show a composition bias toward polar residues. 2 stretches are compositionally biased toward gly residues: residues alanine 461–valine 476 and glutamine 483–arginine 496.

This sequence belongs to the protein kinase superfamily. CMGC Ser/Thr protein kinase family. CDC2/CDKX subfamily. As to quaternary structure, interacts with CYCT1-3. Highly expressed in flowers. Expressed in seedlings, roots, rosettes and stems.

The catalysed reaction is L-seryl-[protein] + ATP = O-phospho-L-seryl-[protein] + ADP + H(+). It catalyses the reaction L-threonyl-[protein] + ATP = O-phospho-L-threonyl-[protein] + ADP + H(+). It carries out the reaction [DNA-directed RNA polymerase] + ATP = phospho-[DNA-directed RNA polymerase] + ADP + H(+). In Arabidopsis thaliana (Mouse-ear cress), this protein is Cyclin-dependent kinase C-2 (CDKC-2).